Reading from the N-terminus, the 116-residue chain is Large ribosomal subunit protein bL20c (116 aa).

The protein belongs to the bacterial ribosomal protein bL20 family.

The protein resides in the plastid. It localises to the chloroplast. Binds directly to 23S ribosomal RNA and is necessary for the in vitro assembly process of the 50S ribosomal subunit. It is not involved in the protein synthesizing functions of that subunit. This Oltmannsiellopsis viridis (Marine flagellate) protein is Large ribosomal subunit protein bL20c.